We begin with the raw amino-acid sequence, 437 residues long: Palmitoyltransferase PFA4 (437 aa).

The Cytoplasmic segment spans residues 1–12; the sequence is MAGLNDVPFIKG. A helical transmembrane segment spans residues 13-33; it reads LAVPSVCALIIFLGYASQFLF. The Lumenal segment spans residues 34-48; that stretch reads NYSTTLEPGPPTRRE. Residues 49–69 form a helical membrane-spanning segment; it reads TIIFNGLLLVLWITYYRTVAT. The Cytoplasmic portion of the chain corresponds to 70–130; that stretch reads DPGRYIFKDR…RNCVSMTTFP (61 aa). The 51-residue stretch at 87–137 folds into the DHHC domain; that stretch reads RWCNKCAAPKPPRAHHCRHCARCVPRMDHHCPWTRNCVSMTTFPHFLRFLI. The active-site S-palmitoyl cysteine intermediate is Cys117. Residues 131-151 traverse the membrane as a helical segment; it reads HFLRFLIYTNMSLWMLGYFLW. At 152 to 173 the chain is on the lumenal side; sequence QRFSKIWEHRRLPAYLGPSFYG. The chain crosses the membrane as a helical span at residues 174–194; sequence LICLSLISIVNFVTTVALGIM. The Cytoplasmic segment spans residues 195 to 437; it reads LINTVKSWVF…KILKKDGLDD (243 aa). The disordered stretch occupies residues 377–419; it reads LDQGLGWVNSDGDRLRDYGVDEEASEPEGVNDDDDDDDDDDVP. Positions 396–419 are enriched in acidic residues; that stretch reads VDEEASEPEGVNDDDDDDDDDDVP.

The protein belongs to the DHHC palmitoyltransferase family. PFA4 subfamily.

Its subcellular location is the endoplasmic reticulum membrane. The enzyme catalyses L-cysteinyl-[protein] + hexadecanoyl-CoA = S-hexadecanoyl-L-cysteinyl-[protein] + CoA. Mediates the reversible addition of palmitate to target proteins, thereby regulating their membrane association and biological function. This Gibberella zeae (strain ATCC MYA-4620 / CBS 123657 / FGSC 9075 / NRRL 31084 / PH-1) (Wheat head blight fungus) protein is Palmitoyltransferase PFA4.